A 421-amino-acid chain; its full sequence is Solute carrier family 35 member F3 (421 aa).

The tract at residues 25–53 (EGEERPREPPGPAEAQAPAGTEAGGRTSR) is disordered. A compositionally biased stretch (low complexity) spans 37–49 (AEAQAPAGTEAGG). The next 10 helical transmembrane spans lie at 66–86 (VFWG…STQL), 98–118 (FTLT…YYAG), 149–169 (VFFT…YLYL), 179–199 (DVSV…WIVL), 208–228 (IVAA…DGFH), 232–252 (VIGI…KVLF), 266–286 (LFLS…PVIL), 305–325 (LCGF…GIAV), 326–346 (TYPT…AVVD), and 352–372 (IVFN…FLLL). Residues 394–421 (KEETAESSGDLGTGPQSRSRRARPSFAR) are disordered. Over residues 411–421 (RSRRARPSFAR) the composition is skewed to basic residues.

This sequence belongs to the SLC35F solute transporter family.

The protein localises to the membrane. It carries out the reaction thiamine(in) = thiamine(out). Functionally, mediates thiamine transport. This is Solute carrier family 35 member F3 (Slc35f3) from Mus musculus (Mouse).